Here is a 336-residue protein sequence, read N- to C-terminus: Glyceraldehyde-3-phosphate dehydrogenase (336 aa).

Residues 12–13 (RI), aspartate 34, arginine 78, and threonine 121 contribute to the NAD(+) site. Residues 151–153 (SCT), threonine 182, arginine 199, 212–213 (TG), and arginine 235 each bind D-glyceraldehyde 3-phosphate. The active-site Nucleophile is the cysteine 152. Asparagine 316 lines the NAD(+) pocket.

The protein belongs to the glyceraldehyde-3-phosphate dehydrogenase family. As to quaternary structure, homotetramer.

It localises to the cytoplasm. The enzyme catalyses D-glyceraldehyde 3-phosphate + phosphate + NAD(+) = (2R)-3-phospho-glyceroyl phosphate + NADH + H(+). It functions in the pathway carbohydrate degradation; glycolysis; pyruvate from D-glyceraldehyde 3-phosphate: step 1/5. Its function is as follows. Catalyzes the oxidative phosphorylation of glyceraldehyde 3-phosphate (G3P) to 1,3-bisphosphoglycerate (BPG) using the cofactor NAD. The first reaction step involves the formation of a hemiacetal intermediate between G3P and a cysteine residue, and this hemiacetal intermediate is then oxidized to a thioester, with concomitant reduction of NAD to NADH. The reduced NADH is then exchanged with the second NAD, and the thioester is attacked by a nucleophilic inorganic phosphate to produce BPG. The chain is Glyceraldehyde-3-phosphate dehydrogenase (gap) from Streptococcus pyogenes serotype M1.